We begin with the raw amino-acid sequence, 908 residues long: Protein translocase subunit SecA (908 aa).

Residues glutamine 87, 105-109 (GEGKT), and aspartate 512 contribute to the ATP site. Residues 865 to 908 (GGDDGSDEMMAHTPMIRDGDKVGRNDPCPCGSGRKYKQCHGKLS) are disordered. Basic and acidic residues predominate over residues 879–888 (MIRDGDKVGR). Residues cysteine 892, cysteine 894, cysteine 903, and histidine 904 each contribute to the Zn(2+) site. Residues 898–908 (RKYKQCHGKLS) are compositionally biased toward basic residues.

Belongs to the SecA family. As to quaternary structure, monomer and homodimer. Part of the essential Sec protein translocation apparatus which comprises SecA, SecYEG and auxiliary proteins SecDF-YajC and YidC. Zn(2+) is required as a cofactor.

It is found in the cell inner membrane. Its subcellular location is the cytoplasm. It carries out the reaction ATP + H2O + cellular proteinSide 1 = ADP + phosphate + cellular proteinSide 2.. Functionally, part of the Sec protein translocase complex. Interacts with the SecYEG preprotein conducting channel. Has a central role in coupling the hydrolysis of ATP to the transfer of proteins into and across the cell membrane, serving both as a receptor for the preprotein-SecB complex and as an ATP-driven molecular motor driving the stepwise translocation of polypeptide chains across the membrane. This is Protein translocase subunit SecA from Shewanella sp. (strain ANA-3).